Consider the following 285-residue polypeptide: Putative sugar uptake protein lin0444 (285 aa).

9 helical membrane-spanning segments follow: residues 2-21 (SIYLIALLPVLGWGFMPIIA), 31-50 (QLLGTSISALLFAFILFWIL), 55-77 (TVLSFIVSFVSGIFWSFGQLLQF), 111-133 (WQTVTAVIIGVVAVILILIGVVM), 146-168 (SVSFHVYGIVILSSFFLTLYVVT), 172-194 (FDVTGFSIILPQAIGMLTCAIGI), 207-229 (VTFNLMTGLSWSIANLGMFLATA), 233-255 (VATSFSISQACVIVATIGGILIF), and 262-284 (LEWTFILSGILLIMVGVVFLSLL).

Belongs to the GRP transporter (TC 2.A.7.5) family.

It localises to the cell membrane. In Listeria innocua serovar 6a (strain ATCC BAA-680 / CLIP 11262), this protein is Putative sugar uptake protein lin0444.